The sequence spans 219 residues: tRNA (guanine-N(7)-)-methyltransferase (219 aa).

Positions 46, 71, 100, and 122 each coordinate S-adenosyl-L-methionine. The active site involves aspartate 122. Substrate is bound by residues lysine 126, aspartate 158, and 199-202 (TEYE).

Belongs to the class I-like SAM-binding methyltransferase superfamily. TrmB family.

The enzyme catalyses guanosine(46) in tRNA + S-adenosyl-L-methionine = N(7)-methylguanosine(46) in tRNA + S-adenosyl-L-homocysteine. It functions in the pathway tRNA modification; N(7)-methylguanine-tRNA biosynthesis. Functionally, catalyzes the formation of N(7)-methylguanine at position 46 (m7G46) in tRNA. The chain is tRNA (guanine-N(7)-)-methyltransferase from Leuconostoc mesenteroides subsp. mesenteroides (strain ATCC 8293 / DSM 20343 / BCRC 11652 / CCM 1803 / JCM 6124 / NCDO 523 / NBRC 100496 / NCIMB 8023 / NCTC 12954 / NRRL B-1118 / 37Y).